Consider the following 688-residue polypeptide: UvrABC system protein B (688 aa).

The Helicase ATP-binding domain occupies 31 to 188 (GRVNAGEPDV…RKFVSMQYQR (158 aa)). Residue 44–51 (GATGTGKS) participates in ATP binding. Positions 97 to 120 (YYDYYQPEAYVPQTDTFIEKDSSV) match the Beta-hairpin motif. A Helicase C-terminal domain is found at 434–587 (QIDDLLEQIR…QVAYNTEHGI (154 aa)). Residues 607–632 (GEDTKKMLEGRGGGKRSPTPNLRREG) are disordered. In terms of domain architecture, UVR spans 642–677 (ETIISDLNDQMLQAAGELKFELAARLRDELGDLKRE).

The protein belongs to the UvrB family. As to quaternary structure, forms a heterotetramer with UvrA during the search for lesions. Interacts with UvrC in an incision complex.

The protein resides in the cytoplasm. In terms of biological role, the UvrABC repair system catalyzes the recognition and processing of DNA lesions. A damage recognition complex composed of 2 UvrA and 2 UvrB subunits scans DNA for abnormalities. Upon binding of the UvrA(2)B(2) complex to a putative damaged site, the DNA wraps around one UvrB monomer. DNA wrap is dependent on ATP binding by UvrB and probably causes local melting of the DNA helix, facilitating insertion of UvrB beta-hairpin between the DNA strands. Then UvrB probes one DNA strand for the presence of a lesion. If a lesion is found the UvrA subunits dissociate and the UvrB-DNA preincision complex is formed. This complex is subsequently bound by UvrC and the second UvrB is released. If no lesion is found, the DNA wraps around the other UvrB subunit that will check the other stand for damage. The chain is UvrABC system protein B from Clavibacter sepedonicus (Clavibacter michiganensis subsp. sepedonicus).